The following is a 326-amino-acid chain: tRNA-modifying protein YgfZ (326 aa).

Positions 27 and 189 each coordinate folate.

The protein belongs to the tRNA-modifying YgfZ family.

Its subcellular location is the cytoplasm. Folate-binding protein involved in regulating the level of ATP-DnaA and in the modification of some tRNAs. It is probably a key factor in regulatory networks that act via tRNA modification, such as initiation of chromosomal replication. The chain is tRNA-modifying protein YgfZ from Shigella sonnei (strain Ss046).